The chain runs to 72 residues: Conotoxin LiC53 (72 aa).

Residues Met-1–Gly-23 form the signal peptide. The propeptide occupies Gly-24–Ala-41. 3 disulfide bridges follow: Cys-45/Cys-59, Cys-52/Cys-63, and Cys-58/Cys-68.

The protein belongs to the conotoxin O2 superfamily. Expressed by the venom duct.

It is found in the secreted. The chain is Conotoxin LiC53 from Conus lividus (Livid cone).